A 307-amino-acid chain; its full sequence is MENKSRYKTIDHVICVEENRKIHVWETLPKENSPKRKNTLIIASGFARRMDHFAGLAEYLSQNGFHVIRYDSLHHVGLSSGTIDEFTMSIGKQSLLAVVDWLNTRKINNLGMLASSLSARIAYASLSEINVSFLITAVGVVNLRYTLERALGFDYLSLPIDELPDNLDFEGHKLGAEVFARDCFDSGWEDLTSTINSMMHLDIPFIAFTANNDDWVKQDEVITLLSSIRSHQCKIYSLLGSSHDLGENLVVLRNFYQSVTKAAIAMDNGCLDIDVDIIEPSFEHLTIAAVNERRMKIEIENQVISLS.

Catalysis depends on charge relay system residues serine 116, aspartate 213, and histidine 243.

Belongs to the LuxD family.

Its pathway is lipid metabolism; fatty acid reduction for biolumincescence. In terms of biological role, acyl transferase is part of the fatty acid reductase system required for aldehyde biosynthesis; it produces fatty acids for the luminescent reaction. This is Acyl transferase from Photorhabdus luminescens (Xenorhabdus luminescens).